We begin with the raw amino-acid sequence, 312 residues long: NAD(P)(+)--arginine ADP-ribosyltransferase 2 (312 aa).

The signal sequence occupies residues 1-20; sequence MELLALRWVLLAGTLLSTSA. Residues 21 to 31 constitute a propeptide that is removed on maturation; it reads ASSALQEGDLG. 2 disulfide bridges follow: Cys-51–Cys-260 and Cys-159–Cys-208. The TR mART core domain maps to 71–256; the sequence is YAYAVGWRKA…IYLRSKGKMS (186 aa). NAD(+) is bound by residues Tyr-108, Arg-164, and Gln-183. The active site involves Arg-164. Ser-186 is a catalytic residue. Residue Ser-217 coordinates NAD(+). Glu-224 is an active-site residue. The propeptide occupies 267–312; the sequence is GGQWGRGHQEVGLGLSPGLALPVLPCSNCSCWGSGHRAGDPIPAAV.

Belongs to the Arg-specific ADP-ribosyltransferase family.

Its subcellular location is the secreted. The protein localises to the extracellular space. It carries out the reaction L-arginyl-[protein] + NAD(+) = N(omega)-(ADP-D-ribosyl)-L-arginyl-[protein] + nicotinamide + H(+). This is NAD(P)(+)--arginine ADP-ribosyltransferase 2 from Gallus gallus (Chicken).